The chain runs to 35 residues: Photosystem II reaction center protein T (35 aa).

A helical transmembrane segment spans residues 3 to 23; sequence ALVYTFLLVSTLGIIFFAIFF.

The protein belongs to the PsbT family. As to quaternary structure, PSII is composed of 1 copy each of membrane proteins PsbA, PsbB, PsbC, PsbD, PsbE, PsbF, PsbH, PsbI, PsbJ, PsbK, PsbL, PsbM, PsbT, PsbY, PsbZ, Psb30/Ycf12, at least 3 peripheral proteins of the oxygen-evolving complex and a large number of cofactors. It forms dimeric complexes.

Its subcellular location is the plastid. It is found in the chloroplast thylakoid membrane. Its function is as follows. Found at the monomer-monomer interface of the photosystem II (PS II) dimer, plays a role in assembly and dimerization of PSII. PSII is a light-driven water plastoquinone oxidoreductase, using light energy to abstract electrons from H(2)O, generating a proton gradient subsequently used for ATP formation. The polypeptide is Photosystem II reaction center protein T (Oenothera argillicola (Appalachian evening primrose)).